The following is a 197-amino-acid chain: Dephospho-CoA kinase (197 aa).

One can recognise a DPCK domain in the interval 2–197 (IIGLTGGIAS…GAIKDLANLV (196 aa)). 10–15 (ASGKST) provides a ligand contact to ATP.

It belongs to the CoaE family.

The protein localises to the cytoplasm. It carries out the reaction 3'-dephospho-CoA + ATP = ADP + CoA + H(+). It participates in cofactor biosynthesis; coenzyme A biosynthesis; CoA from (R)-pantothenate: step 5/5. Catalyzes the phosphorylation of the 3'-hydroxyl group of dephosphocoenzyme A to form coenzyme A. In Streptococcus thermophilus (strain CNRZ 1066), this protein is Dephospho-CoA kinase.